A 396-amino-acid chain; its full sequence is S-adenosylmethionine synthase (396 aa).

His-16 contacts ATP. Asp-18 provides a ligand contact to Mg(2+). Residue Glu-44 coordinates K(+). 2 residues coordinate L-methionine: Glu-57 and Gln-100. The interval 100 to 110 (QSQDIARGVDN) is flexible loop. ATP-binding positions include 162 to 164 (DGK), Asp-237, 243 to 244 (RK), Ala-260, and Lys-264. Residue Asp-237 participates in L-methionine binding. Lys-268 serves as a coordination point for L-methionine.

This sequence belongs to the AdoMet synthase family. Homotetramer; dimer of dimers. Requires Mg(2+) as cofactor. It depends on K(+) as a cofactor.

The protein localises to the cytoplasm. It catalyses the reaction L-methionine + ATP + H2O = S-adenosyl-L-methionine + phosphate + diphosphate. It participates in amino-acid biosynthesis; S-adenosyl-L-methionine biosynthesis; S-adenosyl-L-methionine from L-methionine: step 1/1. Its function is as follows. Catalyzes the formation of S-adenosylmethionine (AdoMet) from methionine and ATP. The overall synthetic reaction is composed of two sequential steps, AdoMet formation and the subsequent tripolyphosphate hydrolysis which occurs prior to release of AdoMet from the enzyme. This chain is S-adenosylmethionine synthase, found in Myxococcus xanthus.